The sequence spans 229 residues: Protein-L-isoaspartate O-methyltransferase (229 aa).

S74 is a catalytic residue.

The protein belongs to the methyltransferase superfamily. L-isoaspartyl/D-aspartyl protein methyltransferase family.

It localises to the cytoplasm. The enzyme catalyses [protein]-L-isoaspartate + S-adenosyl-L-methionine = [protein]-L-isoaspartate alpha-methyl ester + S-adenosyl-L-homocysteine. In terms of biological role, catalyzes the methyl esterification of L-isoaspartyl residues in peptides and proteins that result from spontaneous decomposition of normal L-aspartyl and L-asparaginyl residues. It plays a role in the repair and/or degradation of damaged proteins. This is Protein-L-isoaspartate O-methyltransferase from Pelotomaculum thermopropionicum (strain DSM 13744 / JCM 10971 / SI).